A 570-amino-acid polypeptide reads, in one-letter code: Sulfite reductase [NADPH] hemoprotein beta-component (570 aa).

The [4Fe-4S] cluster site is built by C434, C440, C479, and C483. C483 provides a ligand contact to siroheme.

The protein belongs to the nitrite and sulfite reductase 4Fe-4S domain family. As to quaternary structure, alpha(8)-beta(8). The alpha component is a flavoprotein, the beta component is a hemoprotein. Siroheme is required as a cofactor. Requires [4Fe-4S] cluster as cofactor.

The catalysed reaction is hydrogen sulfide + 3 NADP(+) + 3 H2O = sulfite + 3 NADPH + 4 H(+). It functions in the pathway sulfur metabolism; hydrogen sulfide biosynthesis; hydrogen sulfide from sulfite (NADPH route): step 1/1. Functionally, component of the sulfite reductase complex that catalyzes the 6-electron reduction of sulfite to sulfide. This is one of several activities required for the biosynthesis of L-cysteine from sulfate. This is Sulfite reductase [NADPH] hemoprotein beta-component from Salmonella typhi.